The chain runs to 172 residues: Adenine phosphoribosyltransferase (172 aa).

It belongs to the purine/pyrimidine phosphoribosyltransferase family. In terms of assembly, homodimer.

The protein localises to the cytoplasm. It carries out the reaction AMP + diphosphate = 5-phospho-alpha-D-ribose 1-diphosphate + adenine. It functions in the pathway purine metabolism; AMP biosynthesis via salvage pathway; AMP from adenine: step 1/1. In terms of biological role, catalyzes a salvage reaction resulting in the formation of AMP, that is energically less costly than de novo synthesis. This Alkaliphilus oremlandii (strain OhILAs) (Clostridium oremlandii (strain OhILAs)) protein is Adenine phosphoribosyltransferase.